The chain runs to 149 residues: Large ribosomal subunit protein bL9 (149 aa).

This sequence belongs to the bacterial ribosomal protein bL9 family.

Functionally, binds to the 23S rRNA. The polypeptide is Large ribosomal subunit protein bL9 (Actinobacillus succinogenes (strain ATCC 55618 / DSM 22257 / CCUG 43843 / 130Z)).